Consider the following 1063-residue polypeptide: Exportin-1 (1063 aa).

Residues 43–109 (AQSILTTLKE…KKYVVSLIIK (67 aa)) form the Importin N-terminal domain. The interval 1034 to 1063 (AEEQSNKHQMQRNIPGMLNPHELPEDMQDE) is disordered.

Belongs to the exportin family. In terms of assembly, interacts with Clbn (via its N-terminus). Associates with the nuclear pore complex via interaction with mbo and Nup214. Interacts with target proteins containing NES sequences such as actin and dl. In terms of tissue distribution, high expression observed in the developing embryonic brain, hind gut and posterior spiracles shortly before dorsal closure; and in the ventral nerve cord, midgut and somatic musculature shortly after dorsal closure. Expression increases when the tissue is well developed.

It localises to the nucleus. It is found in the nucleus membrane. Functionally, receptor for the leucine-rich nuclear export signal (NES). Binds cooperatively to the NES on its target protein and to the small GTPase Ran in its active GTP-bound form. Involved in the export of dl, RpS2 and the pre-40S ribosome from the nucleus to the cytoplasm. Plays an important role in nuclear pore assembly by mediating nucleoporin condensation and biogenesis of annulate lamellae. Required for the function or maintenance of certain tissues such as brain and gut. This chain is Exportin-1, found in Drosophila melanogaster (Fruit fly).